The sequence spans 361 residues: MKTTPFTEKHIALGAKMHEFAGYNMPIEYSGIIDEHLTVCNAVGVFDVSHMGEFWVKGPQALAFLQKVTSNNVAALVPGKIQYTCFPNEEGGIVDDLLVYCYEPEKYLLVVNAANIEKDWNWCVSHNTEGAELENSSDNMAQLAVQGPKAILALQKLTDIDLSAIPYYTFTVGRFAGKENVIISNTGYTGAGGFELYFYPDAAEAIWKAVFEAGEEFGIKPVGLGARDTLRLEMGFCLYGNDLDDKTSPIEAGLGWITKFVEGKEFINRPMLEKQKSEGTTRKLVGFEMIDRGIPRHGYELVNEEGEGIGVVTSGTMSPTRKIGIGMGYVKPEYAKVGTEICIDMRGRKLKAIVVKPPFRK.

This sequence belongs to the GcvT family. In terms of assembly, the glycine cleavage system is composed of four proteins: P, T, L and H.

It catalyses the reaction N(6)-[(R)-S(8)-aminomethyldihydrolipoyl]-L-lysyl-[protein] + (6S)-5,6,7,8-tetrahydrofolate = N(6)-[(R)-dihydrolipoyl]-L-lysyl-[protein] + (6R)-5,10-methylene-5,6,7,8-tetrahydrofolate + NH4(+). Functionally, the glycine cleavage system catalyzes the degradation of glycine. This is Aminomethyltransferase from Bacteroides thetaiotaomicron (strain ATCC 29148 / DSM 2079 / JCM 5827 / CCUG 10774 / NCTC 10582 / VPI-5482 / E50).